The sequence spans 199 residues: Recombination protein RecR (199 aa).

The C4-type zinc finger occupies 57 to 72; the sequence is CAECRTFTEEEVCHIC. The Toprim domain maps to 81 to 176; it reads GQICVVESPA…EASRIAHGVP (96 aa).

It belongs to the RecR family.

Its function is as follows. May play a role in DNA repair. It seems to be involved in an RecBC-independent recombinational process of DNA repair. It may act with RecF and RecO. This is Recombination protein RecR from Vibrio parahaemolyticus serotype O3:K6 (strain RIMD 2210633).